Reading from the N-terminus, the 184-residue chain is MVKLADITEIIPIPEDVTVTINGSEVTVKGNGGEIKRNFNHNKITISNDEENVTVKVAFPNKKDKAMVGTIRSHISNMIYGVDHGFTYKMKIVYAHFPMTVKVQGKIVTIDNFLGERSPRKAKIIGDDVKVSVKGEDVTITGINKEHVGQTMANIEQATKIKGRDPRIFQDGIYLVDKRQEELE.

Belongs to the universal ribosomal protein uL6 family. In terms of assembly, part of the 50S ribosomal subunit.

This protein binds to the 23S rRNA, and is important in its secondary structure. It is located near the subunit interface in the base of the L7/L12 stalk, and near the tRNA binding site of the peptidyltransferase center. This Methanosphaera stadtmanae (strain ATCC 43021 / DSM 3091 / JCM 11832 / MCB-3) protein is Large ribosomal subunit protein uL6.